Here is an 860-residue protein sequence, read N- to C-terminus: DNA primase (860 aa).

Residues 804 to 842 (CLNRQHRGNRDNVLVYIQLKADGNRLILILWSTCFATKC) form a CHC2-type zinc finger.

The protein belongs to the herpesviridae DNA primase family. In terms of assembly, associates with the helicase and the primase-associated factor to form the helicase-primase factor.

Its subcellular location is the host nucleus. Functionally, essential component of the helicase/primase complex. Unwinds the DNA at the replication forks and generates single-stranded DNA for both leading and lagging strand synthesis. The primase initiates primer synthesis and thereby produces large amount of short RNA primers on the lagging strand that the polymerase elongates using dNTPs. The chain is DNA primase (U43) from Homo sapiens (Human).